Consider the following 391-residue polypeptide: Succinyl-diaminopimelate desuccinylase (391 aa).

A Zn(2+)-binding site is contributed by histidine 67. Aspartate 69 is an active-site residue. Aspartate 101 contacts Zn(2+). Glutamate 135 acts as the Proton acceptor in catalysis. Residues glutamate 136, glutamate 164, and histidine 353 each coordinate Zn(2+).

Belongs to the peptidase M20A family. DapE subfamily. In terms of assembly, homodimer. The cofactor is Zn(2+). Requires Co(2+) as cofactor.

It catalyses the reaction N-succinyl-(2S,6S)-2,6-diaminopimelate + H2O = (2S,6S)-2,6-diaminopimelate + succinate. It participates in amino-acid biosynthesis; L-lysine biosynthesis via DAP pathway; LL-2,6-diaminopimelate from (S)-tetrahydrodipicolinate (succinylase route): step 3/3. Its function is as follows. Catalyzes the hydrolysis of N-succinyl-L,L-diaminopimelic acid (SDAP), forming succinate and LL-2,6-diaminopimelate (DAP), an intermediate involved in the bacterial biosynthesis of lysine and meso-diaminopimelic acid, an essential component of bacterial cell walls. This chain is Succinyl-diaminopimelate desuccinylase, found in Rickettsia bellii (strain OSU 85-389).